A 381-amino-acid chain; its full sequence is Pre-mRNA-splicing factor cwf28 (381 aa).

A disordered region spans residues 1 to 21 (MKRKAVLEAFSDSEDEDEKKL). A phosphoserine mark is found at S11 and S13. Residues 104–157 (AADNEIVDWKANNSNEKAQNKIATNKESTDILPEEVQLVLNDLNDDVKSANSAN) are a coiled coil. The interval 262–381 (LNSQNEHTEV…DRSYRSTRTL (120 aa)) is disordered. Polar residues predominate over residues 274 to 285 (KSNSIDNLTPSS). A phosphoserine mark is found at S275 and S277. Composition is skewed to basic and acidic residues over residues 287–297 (LFRKRSRDNNL), 306–332 (KHLDYNSRNYNKRDRDPDRTKYREYHS), and 362–375 (SDRYTERENPDRSY).

Belongs to the SPP2 family. As to quaternary structure, belongs to the 40S cdc5-associated complex (or cwf complex), a spliceosome sub-complex reminiscent of a late-stage spliceosome composed of the U2, U5 and U6 snRNAs and at least brr2, cdc5, cwf2/prp3, cwf3/syf1, cwf4/syf3, cwf5/ecm2, spp42/cwf6, cwf7/spf27, cwf8, cwf9, cwf10, cwf11, cwf12, prp45/cwf13, cwf14, cwf15, cwf16, cwf17, cwf18, cwf19, cwf20, cwf21, cwf22, cwf23, cwf24, cwf25, cwf26, cyp7/cwf27, cwf28, cwf29/ist3, lea1, msl1, prp5/cwf1, prp10, prp12/sap130, prp17, prp22, sap61, sap62, sap114, sap145, slu7, smb1, smd1, smd3, smf1, smg1 and syf2.

The protein resides in the nucleus. Its function is as follows. Involved in spliceosome maturation and the first step of pre-mRNA splicing. This chain is Pre-mRNA-splicing factor cwf28 (cwf28), found in Schizosaccharomyces pombe (strain 972 / ATCC 24843) (Fission yeast).